A 484-amino-acid polypeptide reads, in one-letter code: Acetyl-coenzyme A carboxylase carboxyl transferase subunit beta, chloroplastic (484 aa).

A CoA carboxyltransferase N-terminal domain is found at 223–484 (LWIQCDNCYG…LHAFFPLNKN (262 aa)). The Zn(2+) site is built by Cys227, Cys230, Cys243, and Cys246. Residues 227 to 246 (CDNCYGLMYKKVKINVCEQC) form a C4-type zinc finger.

Belongs to the AccD/PCCB family. In terms of assembly, acetyl-CoA carboxylase is a heterohexamer composed of biotin carboxyl carrier protein, biotin carboxylase and 2 subunits each of ACCase subunit alpha and ACCase plastid-coded subunit beta (accD). Zn(2+) serves as cofactor.

The protein resides in the plastid. It is found in the chloroplast stroma. It catalyses the reaction N(6)-carboxybiotinyl-L-lysyl-[protein] + acetyl-CoA = N(6)-biotinyl-L-lysyl-[protein] + malonyl-CoA. It participates in lipid metabolism; malonyl-CoA biosynthesis; malonyl-CoA from acetyl-CoA: step 1/1. Component of the acetyl coenzyme A carboxylase (ACC) complex. Biotin carboxylase (BC) catalyzes the carboxylation of biotin on its carrier protein (BCCP) and then the CO(2) group is transferred by the transcarboxylase to acetyl-CoA to form malonyl-CoA. The chain is Acetyl-coenzyme A carboxylase carboxyl transferase subunit beta, chloroplastic from Capsella bursa-pastoris (Shepherd's purse).